We begin with the raw amino-acid sequence, 386 residues long: Bifunctional enzyme IspD/IspF (386 aa).

The tract at residues 1-230 is 2-C-methyl-D-erythritol 4-phosphate cytidylyltransferase; sequence MIRDERVAAI…RARSILEAPV (230 aa). A 2-C-methyl-D-erythritol 2,4-cyclodiphosphate synthase region spans residues 231–386; the sequence is AMGVGYDTHR…HAVALLVRVR (156 aa). Positions 237 and 239 each coordinate a divalent metal cation. 4-CDP-2-C-methyl-D-erythritol 2-phosphate contacts are provided by residues 237–239 and 262–263; these read DTH and HS. H270 contributes to the a divalent metal cation binding site. 4-CDP-2-C-methyl-D-erythritol 2-phosphate is bound by residues 284–286, 289–293, 360–363, F367, and R370; these read DLG, FPDTD, and TTGE.

In the N-terminal section; belongs to the IspD/TarI cytidylyltransferase family. IspD subfamily. The protein in the C-terminal section; belongs to the IspF family. It depends on a divalent metal cation as a cofactor.

It catalyses the reaction 2-C-methyl-D-erythritol 4-phosphate + CTP + H(+) = 4-CDP-2-C-methyl-D-erythritol + diphosphate. The catalysed reaction is 4-CDP-2-C-methyl-D-erythritol 2-phosphate = 2-C-methyl-D-erythritol 2,4-cyclic diphosphate + CMP. It functions in the pathway isoprenoid biosynthesis; isopentenyl diphosphate biosynthesis via DXP pathway; isopentenyl diphosphate from 1-deoxy-D-xylulose 5-phosphate: step 2/6. It participates in isoprenoid biosynthesis; isopentenyl diphosphate biosynthesis via DXP pathway; isopentenyl diphosphate from 1-deoxy-D-xylulose 5-phosphate: step 4/6. Its function is as follows. Bifunctional enzyme that catalyzes the formation of 4-diphosphocytidyl-2-C-methyl-D-erythritol from CTP and 2-C-methyl-D-erythritol 4-phosphate (MEP) (IspD), and catalyzes the conversion of 4-diphosphocytidyl-2-C-methyl-D-erythritol 2-phosphate (CDP-ME2P) to 2-C-methyl-D-erythritol 2,4-cyclodiphosphate (ME-CPP) with a corresponding release of cytidine 5-monophosphate (CMP) (IspF). In Anaeromyxobacter sp. (strain Fw109-5), this protein is Bifunctional enzyme IspD/IspF.